The sequence spans 474 residues: Bifunctional protein HldE (474 aa).

The segment at 1 to 318 is ribokinase; that stretch reads MKLSMPRFDQ…RAIQREEGSE (318 aa). 194 to 197 provides a ligand contact to ATP; that stretch reads NLSE. D263 is a catalytic residue. Residues 343 to 474 form a cytidylyltransferase region; it reads FTNGCFDILH…AIVEKIRGQG (132 aa).

The protein in the N-terminal section; belongs to the carbohydrate kinase PfkB family. This sequence in the C-terminal section; belongs to the cytidylyltransferase family. As to quaternary structure, homodimer.

It carries out the reaction D-glycero-beta-D-manno-heptose 7-phosphate + ATP = D-glycero-beta-D-manno-heptose 1,7-bisphosphate + ADP + H(+). The catalysed reaction is D-glycero-beta-D-manno-heptose 1-phosphate + ATP + H(+) = ADP-D-glycero-beta-D-manno-heptose + diphosphate. It functions in the pathway nucleotide-sugar biosynthesis; ADP-L-glycero-beta-D-manno-heptose biosynthesis; ADP-L-glycero-beta-D-manno-heptose from D-glycero-beta-D-manno-heptose 7-phosphate: step 1/4. The protein operates within nucleotide-sugar biosynthesis; ADP-L-glycero-beta-D-manno-heptose biosynthesis; ADP-L-glycero-beta-D-manno-heptose from D-glycero-beta-D-manno-heptose 7-phosphate: step 3/4. Functionally, catalyzes the phosphorylation of D-glycero-D-manno-heptose 7-phosphate at the C-1 position to selectively form D-glycero-beta-D-manno-heptose-1,7-bisphosphate. In terms of biological role, catalyzes the ADP transfer from ATP to D-glycero-beta-D-manno-heptose 1-phosphate, yielding ADP-D-glycero-beta-D-manno-heptose. This is Bifunctional protein HldE from Pseudomonas savastanoi pv. phaseolicola (strain 1448A / Race 6) (Pseudomonas syringae pv. phaseolicola (strain 1448A / Race 6)).